Reading from the N-terminus, the 193-residue chain is Acyl carrier protein phosphodiesterase (193 aa).

It belongs to the AcpH family.

The catalysed reaction is holo-[ACP] + H2O = apo-[ACP] + (R)-4'-phosphopantetheine + H(+). Converts holo-ACP to apo-ACP by hydrolytic cleavage of the phosphopantetheine prosthetic group from ACP. This is Acyl carrier protein phosphodiesterase from Shigella boydii serotype 18 (strain CDC 3083-94 / BS512).